The chain runs to 83 residues: Small ribosomal subunit protein bS16c (83 aa).

It belongs to the bacterial ribosomal protein bS16 family.

It is found in the plastid. Its subcellular location is the chloroplast. The protein is Small ribosomal subunit protein bS16c of Chaetosphaeridium globosum (Charophycean green alga).